Consider the following 219-residue polypeptide: Redox-sensing transcriptional repressor Rex (219 aa).

A DNA-binding region (H-T-H motif) is located at residues 17–56; that stretch reads LYYRIFKRFHRENIVKTSSKQIAEAIGIDPATVRRDFSYF. 91–96 lines the NAD(+) pocket; the sequence is GVGNIG.

Belongs to the transcriptional regulatory Rex family. Homodimer.

It is found in the cytoplasm. Modulates transcription in response to changes in cellular NADH/NAD(+) redox state. This is Redox-sensing transcriptional repressor Rex from Streptococcus thermophilus (strain ATCC BAA-491 / LMD-9).